Here is a 276-residue protein sequence, read N- to C-terminus: Hydroxyethylthiazole kinase (276 aa).

Residues Met-53 and Ala-202 each contribute to the substrate site.

Belongs to the Thz kinase family. It depends on Mg(2+) as a cofactor.

It catalyses the reaction 5-(2-hydroxyethyl)-4-methylthiazole + ATP = 4-methyl-5-(2-phosphooxyethyl)-thiazole + ADP + H(+). The protein operates within cofactor biosynthesis; thiamine diphosphate biosynthesis; 4-methyl-5-(2-phosphoethyl)-thiazole from 5-(2-hydroxyethyl)-4-methylthiazole: step 1/1. Thiazole kinase involved in thiamine salvage pathway. This Arabidopsis thaliana (Mouse-ear cress) protein is Hydroxyethylthiazole kinase (THIM).